A 931-amino-acid chain; its full sequence is Protocadherin gamma-A1 (931 aa).

An N-terminal signal peptide occupies residues 1 to 28; that stretch reads MKIQKKLTGCSRLMLLCLSLELLLEAGA. 6 Cadherin domains span residues 29 to 133, 134 to 242, 243 to 347, 348 to 452, 453 to 562, and 570 to 682; these read GNIH…TPQF, QLEE…PPAF, TQAQ…APEV, TITS…SPVF, HQDS…APEI, and DGST…EPSA. Over 29 to 692 the chain is Extracellular; it reads GNIHYSVPEE…KPNDSDLTLY (664 aa). N-linked (GlcNAc...) asparagine glycans are attached at residues asparagine 265, asparagine 419, and asparagine 545. N-linked (GlcNAc...) asparagine glycosylation occurs at asparagine 685. The helical transmembrane segment at 693 to 713 threads the bilayer; that stretch reads LVVAAAAVSCVFLAFVIVLLA. At 714–931 the chain is on the cytoplasmic side; that stretch reads HRLRRWHKSR…KKKSGKKEKK (218 aa). 2 disordered regions span residues 801–840 and 901–931; these read KKEP…WPNN and ATLT…KEKK. A compositionally biased stretch (polar residues) spans 805–840; it reads FSQQAPPNTDWRFSQAQRPGTSGSQNGDDTGTWPNN. The span at 921-931 shows a compositional bias: basic residues; the sequence is NKKKSGKKEKK.

Its subcellular location is the cell membrane. In terms of biological role, potential calcium-dependent cell-adhesion protein. May be involved in the establishment and maintenance of specific neuronal connections in the brain. This Homo sapiens (Human) protein is Protocadherin gamma-A1 (PCDHGA1).